The sequence spans 455 residues: Alcohol acyl transferase 1 allele RGb (455 aa).

Residues histidine 164 and asparagine 385 each act as proton acceptor in the active site.

The protein belongs to the plant acyltransferase family.

Functionally, involved in the biosynthesis of volatile esters which confer ripe apple fruit flavor. Alcohol acyl transferase that can use a wide range of alcohols as substrate to produce esters. The sequence is that of Alcohol acyl transferase 1 allele RGb from Malus domestica (Apple).